The sequence spans 479 residues: Ribosomal RNA small subunit methyltransferase F (479 aa).

Residues 125–131 (AAAPGSK), Glu149, Asp176, and Asp194 each bind S-adenosyl-L-methionine. Residue Cys247 is the Nucleophile of the active site.

The protein belongs to the class I-like SAM-binding methyltransferase superfamily. RsmB/NOP family.

The protein localises to the cytoplasm. It carries out the reaction cytidine(1407) in 16S rRNA + S-adenosyl-L-methionine = 5-methylcytidine(1407) in 16S rRNA + S-adenosyl-L-homocysteine + H(+). In terms of biological role, specifically methylates the cytosine at position 1407 (m5C1407) of 16S rRNA. In Escherichia coli O127:H6 (strain E2348/69 / EPEC), this protein is Ribosomal RNA small subunit methyltransferase F.